Here is a 352-residue protein sequence, read N- to C-terminus: UDP-3-O-acylglucosamine N-acyltransferase (352 aa).

Residue H244 is the Proton acceptor of the active site.

The protein belongs to the transferase hexapeptide repeat family. LpxD subfamily. Homotrimer.

It catalyses the reaction a UDP-3-O-[(3R)-3-hydroxyacyl]-alpha-D-glucosamine + a (3R)-hydroxyacyl-[ACP] = a UDP-2-N,3-O-bis[(3R)-3-hydroxyacyl]-alpha-D-glucosamine + holo-[ACP] + H(+). The protein operates within bacterial outer membrane biogenesis; LPS lipid A biosynthesis. In terms of biological role, catalyzes the N-acylation of UDP-3-O-acylglucosamine using 3-hydroxyacyl-ACP as the acyl donor. Is involved in the biosynthesis of lipid A, a phosphorylated glycolipid that anchors the lipopolysaccharide to the outer membrane of the cell. This chain is UDP-3-O-acylglucosamine N-acyltransferase, found in Anaeromyxobacter sp. (strain Fw109-5).